The following is a 299-amino-acid chain: Delta-9 desaturase-like 1 protein (299 aa).

2 consecutive transmembrane segments (helical) span residues 31 to 51 (IDIA…LAPF) and 55 to 75 (WEAL…ITFS). A Histidine box-1 motif is present at residues 77 to 82 (HRNLTH). Positions 114 to 118 (HRFHH) match the Histidine box-2 motif. Helical transmembrane passes span 174 to 194 (IGLH…LPYL) and 198 to 218 (VGVG…ACHI). Residues 246 to 250 (HNNHH) carry the Histidine box-3 motif. A helical membrane pass occupies residues 262 to 282 (WYQVDLTWYLICFFQALGLAT).

This sequence belongs to the fatty acid desaturase type 1 family. Fe cation is required as a cofactor.

It localises to the endoplasmic reticulum membrane. It functions in the pathway lipid metabolism; polyunsaturated fatty acid biosynthesis. The chain is Delta-9 desaturase-like 1 protein from Arabidopsis thaliana (Mouse-ear cress).